The sequence spans 312 residues: Large ribosomal subunit protein uL10 (312 aa).

Lys14 is covalently cross-linked (Glycyl lysine isopeptide (Lys-Gly) (interchain with G-Cter in ubiquitin)). The residue at position 68 (Ser68) is a Phosphoserine. Residues Lys97 and Lys144 each participate in a glycyl lysine isopeptide (Lys-Gly) (interchain with G-Cter in ubiquitin) cross-link. Residues 199–230 (SSILDITDEELVSHFVSAVSTIASISLAIGYP) form an interaction with P1A-P2B region. The interaction with P1B-P2A stretch occupies residues 231 to 258 (TLPSVGHTLINNYKDLLAVAIAASYHYP). The span at 278-293 (PAATSAASGDAAPAEE) shows a compositional bias: low complexity. Residues 278–312 (PAATSAASGDAAPAEEAAAEEEEESDDDMGFGLFD) are disordered. Residues 294–306 (AAAEEEEESDDDM) show a composition bias toward acidic residues. Ser302 bears the Phosphoserine; by CK2 mark.

It belongs to the universal ribosomal protein uL10 family. Component of the large ribosomal subunit (LSU). Mature yeast ribosomes consist of a small (40S) and a large (60S) subunit. The 40S small subunit contains 1 molecule of ribosomal RNA (18S rRNA) and 33 different proteins (encoded by 57 genes). The large 60S subunit contains 3 rRNA molecules (25S, 5.8S and 5S rRNA) and 46 different proteins (encoded by 81 genes). The 5 acidic ribosomal P-proteins form the stalk structure of the 60S subunit. They are organized as a pentameric complex in which uL10/P0 interacts with 2 heterodimers, P1A-P2B and P1B-P2A. uL10 directly interacts with 28S rRNA. uL10 interacts with YFL034W.

It localises to the cytoplasm. In terms of biological role, component of the ribosome, a large ribonucleoprotein complex responsible for the synthesis of proteins in the cell. The small ribosomal subunit (SSU) binds messenger RNAs (mRNAs) and translates the encoded message by selecting cognate aminoacyl-transfer RNA (tRNA) molecules. The large subunit (LSU) contains the ribosomal catalytic site termed the peptidyl transferase center (PTC), which catalyzes the formation of peptide bonds, thereby polymerizing the amino acids delivered by tRNAs into a polypeptide chain. The nascent polypeptides leave the ribosome through a tunnel in the LSU and interact with protein factors that function in enzymatic processing, targeting, and the membrane insertion of nascent chains at the exit of the ribosomal tunnel. uL10 forms part of the P stalk that participates in recruiting G proteins to the ribosome. The chain is Large ribosomal subunit protein uL10 from Saccharomyces cerevisiae (strain ATCC 204508 / S288c) (Baker's yeast).